The following is a 193-amino-acid chain: Ribonuclease HII (193 aa).

The region spanning Cys-15–Cys-193 is the RNase H type-2 domain. A divalent metal cation contacts are provided by Asp-21, Glu-22, and Asp-112.

It belongs to the RNase HII family. Mn(2+) serves as cofactor. Mg(2+) is required as a cofactor.

It is found in the cytoplasm. It carries out the reaction Endonucleolytic cleavage to 5'-phosphomonoester.. Its function is as follows. Endonuclease that specifically degrades the RNA of RNA-DNA hybrids. The polypeptide is Ribonuclease HII (Rickettsia rickettsii (strain Iowa)).